We begin with the raw amino-acid sequence, 1067 residues long: [F-actin]-monooxygenase MICAL1 (1067 aa).

Positions 1-489 (MASPTSTNPA…RDLYDVLAKE (489 aa)) are monooxygenase domain. Residues C95, 114-116 (EKR), 121-123 (RHN), F181, Y293, and D393 contribute to the FAD site. A Phosphothreonine modification is found at T475. The Calponin-homology (CH) domain occupies 508-612 (AGTQEELLRW…YLSHFHSAFK (105 aa)). At S617 the chain carries Phosphoserine. The interval 645 to 688 (SRAKENAEDAGGKKLRLEMEAETPSTEVPPDPEPGVPLTPPSQH) is disordered. A compositionally biased stretch (basic and acidic residues) spans 646–663 (RAKENAEDAGGKKLRLEM). Residues 646–666 (RAKENAEDAGGKKLRLEMEAE) adopt a coiled-coil conformation. Residues 671-684 (EVPPDPEPGVPLTP) show a composition bias toward pro residues. Residues 695-757 (DLCALCGEHL…LQHLPQTDHK (63 aa)) form the LIM zinc-binding domain. The Zn(2+) site is built by C697, C700, H718, C721, C724, C727, C747, and H750. A compositionally biased stretch (basic and acidic residues) spans 755-766 (DHKAEGSDRGPE). Disordered stretches follow at residues 755-838 (DHKA…RSCS) and 867-886 (KEEK…VPLD). The span at 773 to 789 (PSENSMPPGLSTPTASQ) shows a compositional bias: polar residues. Phosphoserine is present on residues S872, S875, and S876. Acidic residues predominate over residues 876-886 (SEEEEEDVPLD). Residues 901-1067 (GTMNNYPTWR…ELALGTGAQG (167 aa)) form an important for interaction with RAB8A region. The bMERB domain occupies 918 to 1067 (KEEEMKRFCK…ELALGTGAQG (150 aa)). Coiled coils occupy residues 919–962 (EEEM…QSSS) and 999–1027 (NLEE…AADR). The residue at position 1057 (S1057) is a Phosphoserine.

It belongs to the Mical family. Interacts with STK38 and STK38L. Interacts with RAB1B, RAB8A, RAB10, RAB13, RAB15 and RAB35 (in their GTP-bound forms); binding to RAB1B is of low affinity compared to other Rab proteins; at least in case of RAB8A and RAB10 can bind 2 molecules of the Rab proteins simultaneously; ternary complex formation of RAB8A, RAB13 and MICAL1 is possible. Associates with the SH3 domain of NEDD9. Interacts with VIM and PLXNA3. Interacts with GRAF1/ARHGAP26, GRAF2/ARHGAP10, RAB8A, RAB8B and RAB10; may bind simultaneously to GRAFs and Rabs and connects GRAFs to Rabs. Does not interact with RAB1 and RAB11A. It depends on FAD as a cofactor. Expressed in the thymus, lung, spleen, kidney, testis and hematopoietic cells.

It is found in the cytoplasm. Its subcellular location is the cytoskeleton. It localises to the endosome membrane. The protein localises to the midbody. The enzyme catalyses L-methionyl-[F-actin] + NADPH + O2 + H(+) = L-methionyl-(R)-S-oxide-[F-actin] + NADP(+) + H2O. It catalyses the reaction NADPH + O2 + H(+) = H2O2 + NADP(+). In terms of biological role, monooxygenase that promotes depolymerization of F-actin by mediating oxidation of specific methionine residues on actin to form methionine-sulfoxide, resulting in actin filament disassembly and preventing repolymerization. In the absence of actin, it also functions as a NADPH oxidase producing H(2)O(2). Acts as a cytoskeletal regulator that connects NEDD9 to intermediate filaments. Also acts as a negative regulator of apoptosis via its interaction with STK38 and STK38L; acts by antagonizing STK38 and STK38L activation by MST1/STK4. Involved in regulation of lamina-specific connectivity in the nervous system such as the development of lamina-restricted hippocampal connections. Through redox regulation of the actin cytoskeleton controls the intracellular distribution of secretory vesicles containing L1/neurofascin/NgCAM family proteins in neurons, thereby regulating their cell surface levels. May act as Rab effector protein and play a role in vesicle trafficking. Promotes endosomal tubule extension by associating with RAB8 (RAB8A or RAB8B), RAB10 and GRAF (GRAF1/ARHGAP26 or GRAF2/ARHGAP10) on the endosomal membrane which may connect GRAFs to Rabs, thereby participating in neosynthesized Rab8-Rab10-Rab11-dependent protein export. In Homo sapiens (Human), this protein is [F-actin]-monooxygenase MICAL1 (MICAL1).